A 513-amino-acid polypeptide reads, in one-letter code: ETS translocation variant 3 (513 aa).

Positions 35 to 116 (IQLWHFILEL…KGKRFTYKFN (82 aa)) form a DNA-binding region, ETS. Residues 138 to 202 (QSAPPVPTAS…DLEDGSASDW (65 aa)) are disordered. S139, S159, and S315 each carry phosphoserine. The segment at 333 to 513 (QMHPEEPSQF…ATTATAAADA (181 aa)) is disordered. Composition is skewed to basic and acidic residues over residues 357-366 (ERVESREEAV), 380-392 (IKVE…DPDS), and 399-419 (GKEE…EEGK). K381 participates in a covalent cross-link: Glycyl lysine isopeptide (Lys-Gly) (interchain with G-Cter in SUMO2). Residue K388 is modified to N6-acetyllysine; alternate. A Glycyl lysine isopeptide (Lys-Gly) (interchain with G-Cter in SUMO2); alternate cross-link involves residue K388. The segment covering 430 to 439 (WPSVSISTPS) has biased composition (polar residues). Residues 441–450 (EPLEGTEDSE) show a composition bias toward acidic residues. 2 stretches are compositionally biased toward basic and acidic residues: residues 451 to 466 (DRSV…KEDA) and 477 to 489 (RWND…ELNK). Positions 504 to 513 (ATTATAAADA) are enriched in low complexity.

The protein belongs to the ETS family.

Its subcellular location is the nucleus. Its function is as follows. Transcriptional repressor that contribute to growth arrest during terminal macrophage differentiation by repressing target genes involved in Ras-dependent proliferation. Represses MMP1 promoter activity. The protein is ETS translocation variant 3 (Etv3) of Mus musculus (Mouse).